A 208-amino-acid polypeptide reads, in one-letter code: Transmembrane protein 222 (208 aa).

The interval 1–34 is disordered; sequence MAEAEGSSPLLLQPPPPPPRMAEVETPTGAETDM. The Extracellular segment spans residues 1-55; that stretch reads MAEAEGSSPLLLQPPPPPPRMAEVETPTGAETDMKQYHGSGGVVMDVERSRFPYC. A helical transmembrane segment spans residues 56-76; sequence VVWTPIPVLTWFFPIIGHMGI. Over 77–164 the chain is Cytoplasmic; that stretch reads CTSAGVIRDF…MRYNNSTNWN (88 aa). The chain crosses the membrane as a helical span at residues 165-185; sequence MVTLCCFCLIYGKYVSVGAFV. Lys186 is a topological domain (extracellular). Residues 187 to 207 form a helical membrane-spanning segment; the sequence is TWLPFVLLLGIILTVSLVFNL. A topological domain (cytoplasmic) is located at residue Arg208.

It is found in the membrane. It localises to the cell projection. Its subcellular location is the dendrite. This chain is Transmembrane protein 222 (Tmem222), found in Mus musculus (Mouse).